The chain runs to 286 residues: Non-homologous end joining protein Ku (286 aa).

Positions 10-175 (TVGLVSFPVR…EEVREPDFVV (166 aa)) constitute a Ku domain. Positions 226–242 (ERQERQRREAGEVRQAD) are enriched in basic and acidic residues. Residues 226–270 (ERQERQRREAGEVRQADETDEAAETEVPEVDIPASRAPGETGGEL) form a disordered region. A compositionally biased stretch (acidic residues) spans 243 to 254 (ETDEAAETEVPE).

The protein belongs to the prokaryotic Ku family. In terms of assembly, homodimer. Interacts with LigD.

Functionally, with LigD forms a non-homologous end joining (NHEJ) DNA repair enzyme, which repairs dsDNA breaks with reduced fidelity. Binds linear dsDNA with 5'- and 3'- overhangs but not closed circular dsDNA nor ssDNA. Recruits and stimulates the ligase activity of LigD. This Actinosynnema mirum (strain ATCC 29888 / DSM 43827 / JCM 3225 / NBRC 14064 / NCIMB 13271 / NRRL B-12336 / IMRU 3971 / 101) protein is Non-homologous end joining protein Ku.